A 158-amino-acid chain; its full sequence is Regulator of sigma D (158 aa).

It belongs to the Rsd/AlgQ family. In terms of assembly, interacts with RpoD.

The protein resides in the cytoplasm. Binds RpoD and negatively regulates RpoD-mediated transcription activation by preventing the interaction between the primary sigma factor RpoD with the catalytic core of the RNA polymerase and with promoter DNA. May be involved in replacement of the RNA polymerase sigma subunit from RpoD to RpoS during the transition from exponential growth to the stationary phase. The protein is Regulator of sigma D of Escherichia coli (strain UTI89 / UPEC).